The primary structure comprises 639 residues: Lipoteichoic acid synthase 1 (639 aa).

Topologically, residues 1–3 (MKK) are cytoplasmic. The chain crosses the membrane as a helical span at residues 4–24 (LFSYKLSFFVLAVILFWAKTY). Residues 25-41 (LSYKTEFNLGVKGTTQE) lie on the Extracellular side of the membrane. A helical membrane pass occupies residues 42–62 (ILLIFNPFSSAVFFLGLALLA). The Cytoplasmic segment spans residues 63-67 (KGRKS). The helical transmembrane segment at 68–88 (AIIMLIIDFLMTFVLYANILF) threads the bilayer. Topologically, residues 89–116 (YRFFDDFLTFPNIKQSGNVGNMGDGIFS) are extracellular. Residues 117-137 (IMAGHDIFYFLDIIILIAVLI) traverse the membrane as a helical segment. The Cytoplasmic portion of the chain corresponds to 138–150 (WRPELKEYKMKKR). Residues 151 to 171 (FASLVILSGIALFFINLHYAE) traverse the membrane as a helical segment. Topologically, residues 172–639 (KDRPQLLTRT…YHYGKEKEIK (468 aa)) are extracellular. Residues E252 and T297 each coordinate Mn(2+). T297 is a catalytic residue. Substrate is bound at residue H413. Mn(2+) is bound by residues D472 and H473.

The protein belongs to the LTA synthase family. Post-translationally, proteolytically cleaved by the type I signal peptidases SipT and SipV.

The protein resides in the cell membrane. It is found in the secreted. The protein operates within cell wall biogenesis; lipoteichoic acid biosynthesis. Catalyzes the polymerization of lipoteichoic acid (LTA) polyglycerol phosphate, a reaction that presumably uses phosphatidylglycerol (PG) as substrate. The polypeptide is Lipoteichoic acid synthase 1 (ltaS1) (Bacillus subtilis (strain 168)).